Consider the following 29-residue polypeptide: Cytochrome b6-f complex subunit 8 (29 aa).

Residues 3–23 (TVSIAWAALMVIFTFSISLVV) form a helical membrane-spanning segment.

It belongs to the PetN family. As to quaternary structure, the 4 large subunits of the cytochrome b6-f complex are cytochrome b6, subunit IV (17 kDa polypeptide, PetD), cytochrome f and the Rieske protein, while the 4 small subunits are PetG, PetL, PetM and PetN. The complex functions as a dimer.

Its subcellular location is the plastid. It localises to the chloroplast thylakoid membrane. In terms of biological role, component of the cytochrome b6-f complex, which mediates electron transfer between photosystem II (PSII) and photosystem I (PSI), cyclic electron flow around PSI, and state transitions. The sequence is that of Cytochrome b6-f complex subunit 8 from Psilotum nudum (Whisk fern).